The primary structure comprises 55 residues: Spermatid nuclear transition protein 1 (55 aa).

Residues 1–42 show a composition bias toward basic residues; that stretch reads MSTSRKLKSQGMRRGKNRTPHKGVKRSGSKRKYRKSSLKSRK. Residues 1–55 are disordered; sequence MSTSRKLKSQGMRRGKNRTPHKGVKRSGSKRKYRKSSLKSRKRCDDANRNLRSHL. A phosphoserine mark is found at Ser-9, Ser-36, Ser-37, and Ser-40.

It belongs to the nuclear transition protein 1 family. Testis.

It is found in the nucleus. Its subcellular location is the chromosome. Its function is as follows. Plays a key role in the replacement of histones to protamine in the elongating spermatids of mammals. In condensing spermatids, loaded onto the nucleosomes, where it promotes the recruitment and processing of protamines, which are responsible for histone eviction. The protein is Spermatid nuclear transition protein 1 (TNP1) of Bos taurus (Bovine).